The following is a 335-amino-acid chain: Tetraacyldisaccharide 4'-kinase (335 aa).

51-58 serves as a coordination point for ATP; the sequence is HVGGAGKT.

The protein belongs to the LpxK family.

The catalysed reaction is a lipid A disaccharide + ATP = a lipid IVA + ADP + H(+). The protein operates within glycolipid biosynthesis; lipid IV(A) biosynthesis; lipid IV(A) from (3R)-3-hydroxytetradecanoyl-[acyl-carrier-protein] and UDP-N-acetyl-alpha-D-glucosamine: step 6/6. Its function is as follows. Transfers the gamma-phosphate of ATP to the 4'-position of a tetraacyldisaccharide 1-phosphate intermediate (termed DS-1-P) to form tetraacyldisaccharide 1,4'-bis-phosphate (lipid IVA). This is Tetraacyldisaccharide 4'-kinase from Bradyrhizobium sp. (strain ORS 278).